Here is a 133-residue protein sequence, read N- to C-terminus: Profilin (133 aa).

Belongs to the profilin family.

More likely to influence phosphoinositide metabolism than actin assembly. This Cowpox virus (strain GRI-90 / Grishak) (CPV) protein is Profilin.